The following is a 460-amino-acid chain: Methylenetetrahydrofolate--tRNA-(uracil-5-)-methyltransferase TrmFO (460 aa).

Residue 12-17 (GGGLAG) participates in FAD binding.

Belongs to the MnmG family. TrmFO subfamily. The cofactor is FAD.

Its subcellular location is the cytoplasm. The enzyme catalyses uridine(54) in tRNA + (6R)-5,10-methylene-5,6,7,8-tetrahydrofolate + NADH + H(+) = 5-methyluridine(54) in tRNA + (6S)-5,6,7,8-tetrahydrofolate + NAD(+). It carries out the reaction uridine(54) in tRNA + (6R)-5,10-methylene-5,6,7,8-tetrahydrofolate + NADPH + H(+) = 5-methyluridine(54) in tRNA + (6S)-5,6,7,8-tetrahydrofolate + NADP(+). Its function is as follows. Catalyzes the folate-dependent formation of 5-methyl-uridine at position 54 (M-5-U54) in all tRNAs. This is Methylenetetrahydrofolate--tRNA-(uracil-5-)-methyltransferase TrmFO from Crocosphaera subtropica (strain ATCC 51142 / BH68) (Cyanothece sp. (strain ATCC 51142)).